A 191-amino-acid chain; its full sequence is Ribosomal RNA small subunit methyltransferase G (191 aa).

S-adenosyl-L-methionine is bound by residues Gly62, Leu67, 111–112, and Arg124; that span reads IE.

This sequence belongs to the methyltransferase superfamily. RNA methyltransferase RsmG family.

The protein localises to the cytoplasm. The catalysed reaction is guanosine(527) in 16S rRNA + S-adenosyl-L-methionine = N(7)-methylguanosine(527) in 16S rRNA + S-adenosyl-L-homocysteine. Specifically methylates the N7 position of guanine in position 527 of 16S rRNA. The polypeptide is Ribosomal RNA small subunit methyltransferase G (Rickettsia rickettsii (strain Sheila Smith)).